The following is a 112-amino-acid chain: Large ribosomal subunit protein bL17 (112 aa).

The protein belongs to the bacterial ribosomal protein bL17 family. Part of the 50S ribosomal subunit. Contacts protein L32.

The sequence is that of Large ribosomal subunit protein bL17 from Desulfitobacterium hafniense (strain DSM 10664 / DCB-2).